The chain runs to 321 residues: 4-dihydromethyl-trisporate dehydrogenase (321 aa).

Tyr51 (proton donor) is an active-site residue. Residue His113 participates in substrate binding.

This sequence belongs to the aldo/keto reductase family.

Its pathway is pheromone biosynthesis; trisporate biosynthesis. Functionally, catalyzes the NADP-dependent oxidation of (+) mating-type specific precursor 4-dihydromethyl-trisporate to methyl-trisporate. In Mucor mucedo (Common pinmould), this protein is 4-dihydromethyl-trisporate dehydrogenase (tdh).